Reading from the N-terminus, the 775-residue chain is Dipeptidyl peptidase 4 (775 aa).

The N-terminal stretch at 1–15 (MKLLSLLMLAGIAQA) is a signal peptide. 4 N-linked (GlcNAc...) asparagine glycosylation sites follow: Asn81, Asn111, Asn154, and Asn219. Active-site charge relay system residues include Ser613, Asp690, and His725.

Belongs to the peptidase S9B family.

The protein resides in the secreted. It carries out the reaction Release of an N-terminal dipeptide, Xaa-Yaa-|-Zaa-, from a polypeptide, preferentially when Yaa is Pro, provided Zaa is neither Pro nor hydroxyproline.. Functionally, extracellular dipeptidyl-peptidase which removes N-terminal dipeptides sequentially from polypeptides having unsubstituted N-termini provided that the penultimate residue is proline. Contributes to pathogenicity. The polypeptide is Dipeptidyl peptidase 4 (DPP4) (Trichophyton rubrum (Athlete's foot fungus)).